Consider the following 261-residue polypeptide: Undecaprenyl-diphosphatase 2 (261 aa).

Transmembrane regions (helical) follow at residues 1-21, 38-58, 75-95, 103-123, 138-158, 178-198, 212-232, and 240-260; these read MLEALLLGVVEGLTEFLPISS, PGKTYEIVVQLGAILAVCVVF, FAFARNVMVAFLPAAVIGATL, LESPLVAAIALVVGGVAILVI, MSPALALGVGFCQVLAMVPGV, AAEFSFFLAIPTMCGASAYSL, LIALGFVAAFLSALVVVKGFI, and FAPFAWYRIAFGSLMAVLILM.

The protein belongs to the UppP family.

It is found in the cell inner membrane. The catalysed reaction is di-trans,octa-cis-undecaprenyl diphosphate + H2O = di-trans,octa-cis-undecaprenyl phosphate + phosphate + H(+). Its function is as follows. Catalyzes the dephosphorylation of undecaprenyl diphosphate (UPP). Confers resistance to bacitracin. In Paramagnetospirillum magneticum (strain ATCC 700264 / AMB-1) (Magnetospirillum magneticum), this protein is Undecaprenyl-diphosphatase 2.